Reading from the N-terminus, the 1529-residue chain is uncharacterized protein (1529 aa).

Residues 1-11 (MDKNNNNNNSN) are compositionally biased toward low complexity. Disordered stretches follow at residues 1–85 (MDKN…SKGV), 335–371 (LLSNGGGISTSEPEISPSTSPLTGTTPTSPSSSWSSS), 660–694 (LPNLTNSISSPSHSSSSSSSTTTNINNSNNNTATA), 798–843 (NCNI…SSYS), 1016–1035 (SSLPISQNLSDDSSNTNTNN), 1334–1364 (QQQQQQPQQQSSQPQQQSSQPQQIPQSQLQQ), and 1454–1497 (QQQV…SRLP). The segment covering 24–42 (QKRVQNPSFSSGQSRTVPS) has biased composition (polar residues). Positions 51 to 79 (ISSSSSSSSISTTNNTTTTTTSGTGSTSS) are enriched in low complexity. The span at 810–833 (NNNNNNNNNNNNNNNNNNNNNNNN) shows a compositional bias: low complexity. Composition is skewed to polar residues over residues 834–843 (VLPRSNSSYS) and 1016–1027 (SSLPISQNLSDD). Residues 1454–1494 (QQQVQTPSSPQTLASLLGNSSSNTLTSSSSTLSLNESSTLS) are compositionally biased toward low complexity.

This is an uncharacterized protein from Dictyostelium discoideum (Social amoeba).